Consider the following 291-residue polypeptide: Glycine--tRNA ligase alpha subunit (291 aa).

It belongs to the class-II aminoacyl-tRNA synthetase family. As to quaternary structure, tetramer of two alpha and two beta subunits.

Its subcellular location is the cytoplasm. It catalyses the reaction tRNA(Gly) + glycine + ATP = glycyl-tRNA(Gly) + AMP + diphosphate. This Microcystis aeruginosa (strain NIES-843 / IAM M-2473) protein is Glycine--tRNA ligase alpha subunit.